We begin with the raw amino-acid sequence, 261 residues long: Ribosomal RNA small subunit methyltransferase J (261 aa).

S-adenosyl-L-methionine contacts are provided by residues 111 to 112 (RD), 127 to 128 (ER), 163 to 164 (SS), and Asp-181.

The protein belongs to the methyltransferase superfamily. RsmJ family.

The protein localises to the cytoplasm. The enzyme catalyses guanosine(1516) in 16S rRNA + S-adenosyl-L-methionine = N(2)-methylguanosine(1516) in 16S rRNA + S-adenosyl-L-homocysteine + H(+). In terms of biological role, specifically methylates the guanosine in position 1516 of 16S rRNA. This chain is Ribosomal RNA small subunit methyltransferase J, found in Shewanella sp. (strain ANA-3).